The chain runs to 275 residues: Rhamnulose-1-phosphate aldolase (275 aa).

Residue Glu117 is part of the active site. 3 residues coordinate Zn(2+): His141, His143, and His212.

Belongs to the aldolase class II family. RhaD subfamily. As to quaternary structure, homotetramer. It depends on Zn(2+) as a cofactor.

The protein localises to the cytoplasm. It carries out the reaction L-rhamnulose 1-phosphate = (S)-lactaldehyde + dihydroxyacetone phosphate. Its pathway is carbohydrate degradation; L-rhamnose degradation; glycerone phosphate from L-rhamnose: step 3/3. Its function is as follows. Catalyzes the reversible cleavage of L-rhamnulose-1-phosphate to dihydroxyacetone phosphate (DHAP) and L-lactaldehyde. The protein is Rhamnulose-1-phosphate aldolase of Salmonella paratyphi B (strain ATCC BAA-1250 / SPB7).